Consider the following 78-residue polypeptide: Defensin-like protein 90 (78 aa).

A signal peptide spans 1–25 (MTTKMFSYVLLHSLMMFAIILSSMG). 4 disulfide bridges follow: C33–C70, C38–C59, C44–C68, and C48–C69.

This sequence belongs to the DEFL family.

It localises to the secreted. This chain is Defensin-like protein 90, found in Arabidopsis thaliana (Mouse-ear cress).